We begin with the raw amino-acid sequence, 152 residues long: Superoxide dismutase [Cu-Zn] (152 aa).

Residues His45, His47, and His62 each coordinate Cu cation. Residues Cys56 and Cys145 are joined by a disulfide bond. Zn(2+)-binding residues include His62, His70, His79, and Asp82. His119 contributes to the Cu cation binding site.

This sequence belongs to the Cu-Zn superoxide dismutase family. As to quaternary structure, homodimer. Cu cation is required as a cofactor. Zn(2+) serves as cofactor.

It is found in the cytoplasm. It catalyses the reaction 2 superoxide + 2 H(+) = H2O2 + O2. Its function is as follows. Destroys radicals which are normally produced within the cells and which are toxic to biological systems. The sequence is that of Superoxide dismutase [Cu-Zn] (SODCC) from Zantedeschia aethiopica (White calla lily).